The chain runs to 218 residues: ETS domain-containing protein ets-7 (218 aa).

Positions 12–93 (QRLLNFLRGL…KGKDSRYCFL (82 aa)) form a DNA-binding region, ETS. Positions 131-161 (TSNFSLQSSPSSSSNSSSARTMSATSSPTSS) are enriched in low complexity. Positions 131-162 (TSNFSLQSSPSSSSNSSSARTMSATSSPTSSL) are disordered.

This sequence belongs to the ETS family.

The protein resides in the nucleus. Functionally, probable transcription factor. Involved in responses to oxidative stress. The protein is ETS domain-containing protein ets-7 of Caenorhabditis elegans.